Reading from the N-terminus, the 436-residue chain is MPMSSLPAAILSHMTAINNVPPPPLHSIPNLKKSKHINYGQLNALCHIRGQHSRSMSNILSAHDTFMKQYPKVFLHQKPRLPKLFKQEEQRELNEGKEESQHQQPDDSNNIAVHVQRAHGGHILYRPKRATEKFEEFLAILKKLPIHRTPYEHKTVWKFLKTIPDLTFQLNDKHLKTLSKTVFSETWLKGSTVVANDGFYVILKGLARPQTNVYKNLIEGSDSPDSFISQSFHSFIWSEEFKNSTLAEMYLPSYDSMLSKWSTFGTLEVMPQNESETQMFSVVTEDDCEILKIPAKGYAKIKEEKIKLENMQKLKLIRMCPYYEEWPTLSIYELIALLKWKKFPPGHVIVESGNIISFVGYINSGCCNIYRSIIGFVKLRSNKVKRSQKLVYMGKLKEKESFGEISVLLQVPFTCTIITKKEVEMAIIEDKDLFVA.

Residues 89-105 (EQRELNEGKEESQHQQP) show a composition bias toward basic and acidic residues. A disordered region spans residues 89–108 (EQRELNEGKEESQHQQPDDS). 322-436 (YYEEWPTLSI…IIEDKDLFVA (115 aa)) lines the a nucleoside 3',5'-cyclic phosphate pocket.

This is Cyclic nucleotide-binding domain-containing protein 1 (CNBD1) from Homo sapiens (Human).